Reading from the N-terminus, the 499-residue chain is MHEIITLQLGQRANYLATHFWNLQESYFTYNEGEESPIDHDVHFRAGVGADGSETYTPRTLIYDLKGAFGTLRKQNALYELSTDSEYGQGLWDGKEVIQKQTPIIPSEYQLNLEQGLPAPALSSETVRYWSDYNRVFYHPRSIIQLNDYELNSKIMPFEDWDVGEDLFNDLDKEHDLLDRDVRPFAEECDQLRAFQLFAGSDDAWGGFAAKYLDRIRDEYGKKAVWVWAMEGGSKLQRRNQLKRDINKARSIHAMAPQSSLYVPIKDPPGHVPSTINLDAQSEWQTSALISSALETVTLPTRLRPYHDFETSLAGEDGMHKIFELQSTILPEDKTPTGAAGGNEASTEATSKVKTEFDMDFTYDDPQNRNSHIFNQVQITRGYSPVTDEASIREDLGLSRKKRFYNSEPMLESFYTPLAFPTLDSFPHNLFPVKESNAKINILASLTASSRTAGKLRAMEVVARRVVGVDERENLVNGLGEIRESYETGWMSDSDFDDD.

The protein belongs to the misato family.

It is found in the mitochondrion. Functionally, involved in the partitioning of the mitochondrial organelle and mitochondrial DNA (mtDNA) inheritance. This chain is Protein dml1 (dml1), found in Aspergillus clavatus (strain ATCC 1007 / CBS 513.65 / DSM 816 / NCTC 3887 / NRRL 1 / QM 1276 / 107).